The chain runs to 211 residues: Thioredoxin domain-containing protein 9 homolog (211 aa).

A Thioredoxin domain is found at 68-178; sequence YSEIHSEKDF…LEERIARAQV (111 aa). Polar residues predominate over residues 184 to 203; the sequence is ESSSLKPKSTTQVRRNVRQS. Residues 184-211 are disordered; it reads ESSSLKPKSTTQVRRNVRQSARSDSDSE.

The polypeptide is Thioredoxin domain-containing protein 9 homolog (Arabidopsis thaliana (Mouse-ear cress)).